Consider the following 665-residue polypeptide: F-box/LRR-repeat protein 3 (665 aa).

In terms of domain architecture, F-box spans 11-60; it reads KPFDLLSEELVFIILDLISPNPSDLKSFSLTCKSFYQLESKHRGSLKPLR. LRR repeat units follow at residues 61–81, 82–108, 109–134, 135–159, 160–185, 186–211, 214–235, 236–261, 262–287, 288–312, 313–338, 339–364, 365–390, 391–416, 419–440, 441–466, 467–492, 493–517, 518–543, 544–569, and 594–619; these read SDYL…DLTF, CPRV…DLSR, SGSF…DLSN, ATEM…KLGR, CKML…SLKW, CVGV…DLSY, ITGK…LLEG, CFGV…DASS, CQNL…DLSH, CSSV…IRLD, GCSV…SLSK, CVSV…DITC, CRKL…KMES, CSLV…DLTD, IDDE…KLGI, CLNI…DLYR, SVGI…NISY, CQDI…ESRG, CPNI…DLKK, CPSI…NVSD, and SSGL…KLHA.

The chain is F-box/LRR-repeat protein 3 (FBL3) from Arabidopsis thaliana (Mouse-ear cress).